Consider the following 267-residue polypeptide: MIDKSAVIHPSSIIEEGAVIGANVRIGPFCVIGSHVEIGEGTDIKSHVVINGHTRIGRDNQIYQFASIGEVNQDLKYRGEPTQVIIGDRNLIRESVTIHRGTTQGGNITKIGNDNLLMINTHVAHDCIIGDRCIIANNGTLGGHVTLGDYVIIGGMSAVHQFCQIGSHVMVGGCSGVAQDVPPFVIAQGNHATPYGLNIEGLKRRGFAKEDLHAIRNAYKILYRNGKTLEEAREEIAQLAADNNNQYVKIFSDFLENSAKSNRGIIR.

This sequence belongs to the transferase hexapeptide repeat family. LpxA subfamily. Homotrimer.

The protein localises to the cytoplasm. It catalyses the reaction a (3R)-hydroxyacyl-[ACP] + UDP-N-acetyl-alpha-D-glucosamine = a UDP-3-O-[(3R)-3-hydroxyacyl]-N-acetyl-alpha-D-glucosamine + holo-[ACP]. It participates in glycolipid biosynthesis; lipid IV(A) biosynthesis; lipid IV(A) from (3R)-3-hydroxytetradecanoyl-[acyl-carrier-protein] and UDP-N-acetyl-alpha-D-glucosamine: step 1/6. Its function is as follows. Involved in the biosynthesis of lipid A, a phosphorylated glycolipid that anchors the lipopolysaccharide to the outer membrane of the cell. The polypeptide is Acyl-[acyl-carrier-protein]--UDP-N-acetylglucosamine O-acyltransferase (Proteus mirabilis (strain HI4320)).